The sequence spans 157 residues: Endoribonuclease YbeY (157 aa).

Zn(2+) contacts are provided by His-123, His-127, and His-133.

It belongs to the endoribonuclease YbeY family. The cofactor is Zn(2+).

The protein resides in the cytoplasm. Single strand-specific metallo-endoribonuclease involved in late-stage 70S ribosome quality control and in maturation of the 3' terminus of the 16S rRNA. In Limosilactobacillus fermentum (strain NBRC 3956 / LMG 18251) (Lactobacillus fermentum), this protein is Endoribonuclease YbeY.